Consider the following 443-residue polypeptide: ATP-dependent RNA helicase SUB2 (443 aa).

A Q motif motif is present at residues 60–88 (TGFRDFLLKPELLRAITDCGFEHPSEVQQ). Positions 91 to 266 (IPTAILKVDV…KKFMRNPLEV (176 aa)) constitute a Helicase ATP-binding domain. 104–111 (AKSGLGKT) contributes to the ATP binding site. Positions 213–216 (DECD) match the DEAD box motif. The Helicase C-terminal domain maps to 294-439 (KLNELLDNLE…EYPEEGVDAS (146 aa)).

The protein belongs to the DEAD box helicase family. DECD subfamily.

It is found in the nucleus. It catalyses the reaction ATP + H2O = ADP + phosphate + H(+). In terms of biological role, ATP-binding RNA helicase involved in transcription elongation and required for the export of mRNA out of the nucleus. SUB2 also plays a role in pre-mRNA splicing and spliceosome assembly. May be involved in rDNA and telomeric silencing, and maintenance of genome integrity. The protein is ATP-dependent RNA helicase SUB2 (SUB2) of Coccidioides immitis (strain RS) (Valley fever fungus).